A 521-amino-acid polypeptide reads, in one-letter code: Apolipoprotein N-acyltransferase (521 aa).

5 helical membrane-spanning segments follow: residues 24–44 (IKET…FIAL), 71–91 (WLGF…IGYI), 128–148 (IGFL…FNNL), 151–171 (IADI…NSGI), and 182–202 (NLLN…YGMI). In terms of domain architecture, CN hydrolase spans 218-472 (LNIAAIQLNT…KGYLLSTVKL (255 aa)). Glu-263 (proton acceptor) is an active-site residue. Lys-331 is an active-site residue. The active-site Nucleophile is the Cys-383.

This sequence belongs to the CN hydrolase family. Apolipoprotein N-acyltransferase subfamily.

The protein localises to the cell inner membrane. The enzyme catalyses N-terminal S-1,2-diacyl-sn-glyceryl-L-cysteinyl-[lipoprotein] + a glycerophospholipid = N-acyl-S-1,2-diacyl-sn-glyceryl-L-cysteinyl-[lipoprotein] + a 2-acyl-sn-glycero-3-phospholipid + H(+). It functions in the pathway protein modification; lipoprotein biosynthesis (N-acyl transfer). Its function is as follows. Catalyzes the phospholipid dependent N-acylation of the N-terminal cysteine of apolipoprotein, the last step in lipoprotein maturation. The sequence is that of Apolipoprotein N-acyltransferase from Borreliella burgdorferi (strain ATCC 35210 / DSM 4680 / CIP 102532 / B31) (Borrelia burgdorferi).